Here is a 608-residue protein sequence, read N- to C-terminus: CTP synthase (608 aa).

An amidoligase domain region spans residues 1–271; it reads MGQAHITKHI…DAYVVRRLGL (271 aa). Serine 18 is a CTP binding site. Serine 18 provides a ligand contact to UTP. ATP-binding positions include 19-24 and aspartate 76; that span reads SLGKGL. Mg(2+)-binding residues include aspartate 76 and glutamate 145. CTP is bound by residues 152 to 154, 192 to 197, and lysine 228; these read DIE and KTKPTQ. Residues 192–197 and lysine 228 each bind UTP; that span reads KTKPTQ. Positions 296–545 constitute a Glutamine amidotransferase type-1 domain; that stretch reads TIAIVGKYVD…VAAAVAHADR (250 aa). Glycine 359 provides a ligand contact to L-glutamine. The active-site Nucleophile; for glutamine hydrolysis is cysteine 386. L-glutamine-binding positions include 387–390, glutamate 410, and arginine 471; that span reads LGLQ. Catalysis depends on residues histidine 518 and glutamate 520. Residues 550-608 form a disordered region; sequence LPVDLPSEDAPTPENGVPENGAAQTRGVTAGRSGGSIRRGASASRPSVSSNGTAALVSP. Low complexity predominate over residues 584–594; sequence GSIRRGASASR.

Belongs to the CTP synthase family. As to quaternary structure, homotetramer.

It catalyses the reaction UTP + L-glutamine + ATP + H2O = CTP + L-glutamate + ADP + phosphate + 2 H(+). The enzyme catalyses L-glutamine + H2O = L-glutamate + NH4(+). The catalysed reaction is UTP + NH4(+) + ATP = CTP + ADP + phosphate + 2 H(+). Its pathway is pyrimidine metabolism; CTP biosynthesis via de novo pathway; CTP from UDP: step 2/2. Its activity is regulated as follows. Allosterically activated by GTP, when glutamine is the substrate; GTP has no effect on the reaction when ammonia is the substrate. The allosteric effector GTP functions by stabilizing the protein conformation that binds the tetrahedral intermediate(s) formed during glutamine hydrolysis. Inhibited by the product CTP, via allosteric rather than competitive inhibition. Catalyzes the ATP-dependent amination of UTP to CTP with either L-glutamine or ammonia as the source of nitrogen. Regulates intracellular CTP levels through interactions with the four ribonucleotide triphosphates. The sequence is that of CTP synthase from Frankia casuarinae (strain DSM 45818 / CECT 9043 / HFP020203 / CcI3).